The sequence spans 240 residues: 3-dehydroquinate dehydratase (240 aa).

3-dehydroquinate is bound by residues S15, 42-44, and R73; that span reads EWR. H132 (proton donor/acceptor) is an active-site residue. Residue K160 is the Schiff-base intermediate with substrate of the active site. 3 residues coordinate 3-dehydroquinate: R202, S221, and Q225.

The protein belongs to the type-I 3-dehydroquinase family. In terms of assembly, homodimer.

The enzyme catalyses 3-dehydroquinate = 3-dehydroshikimate + H2O. The protein operates within metabolic intermediate biosynthesis; chorismate biosynthesis; chorismate from D-erythrose 4-phosphate and phosphoenolpyruvate: step 3/7. In terms of biological role, involved in the third step of the chorismate pathway, which leads to the biosynthesis of aromatic amino acids. Catalyzes the cis-dehydration of 3-dehydroquinate (DHQ) and introduces the first double bond of the aromatic ring to yield 3-dehydroshikimate. The protein is 3-dehydroquinate dehydratase of Latilactobacillus sakei subsp. sakei (strain 23K) (Lactobacillus sakei subsp. sakei).